The sequence spans 206 residues: Tektin bundle-interacting protein 1 (206 aa).

In terms of assembly, microtubule inner protein component of sperm flagellar doublet microtubules.

The protein resides in the cytoplasm. Its subcellular location is the cytoskeleton. The protein localises to the cilium axoneme. It is found in the flagellum axoneme. In terms of biological role, microtubule inner protein (MIP) part of the dynein-decorated doublet microtubules (DMTs) in cilia axoneme, which is required for motile cilia beating. Located at the center of the tektin bundle where may function to recruit tektins or stabilize the bundle. The sequence is that of Tektin bundle-interacting protein 1 from Mus musculus (Mouse).